The primary structure comprises 147 residues: 3-hydroxyacyl-[acyl-carrier-protein] dehydratase FabZ (147 aa).

The active site involves His46.

Belongs to the thioester dehydratase family. FabZ subfamily.

The protein resides in the cytoplasm. The enzyme catalyses a (3R)-hydroxyacyl-[ACP] = a (2E)-enoyl-[ACP] + H2O. Functionally, involved in unsaturated fatty acids biosynthesis. Catalyzes the dehydration of short chain beta-hydroxyacyl-ACPs and long chain saturated and unsaturated beta-hydroxyacyl-ACPs. This chain is 3-hydroxyacyl-[acyl-carrier-protein] dehydratase FabZ, found in Syntrophobacter fumaroxidans (strain DSM 10017 / MPOB).